The primary structure comprises 331 residues: HTH-type transcriptional regulator RipA (331 aa).

Positions 112–209 (RAVAQVLVSN…GATPSTFTTG (98 aa)) constitute an HTH araC/xylS-type domain. DNA-binding regions (H-T-H motif) lie at residues 129–150 (EEFA…LKST) and 176–199 (ISVV…RRHT).

Functionally, under iron limitation, RipA negatively controls the expression of the acn (aconitase), catA (catechol 1,2 dioxygenase), leuCD (isopropylmalate dehydratase), narKGHJI (nitrite/nitrate transporter and nitrate reductase), sdhCAB (succinate dehydrogenase), pta (phosphotransacetylase) and katA (catalase) genes. Binds to the consensus sequence in the promoter region. The polypeptide is HTH-type transcriptional regulator RipA (Corynebacterium glutamicum (strain ATCC 13032 / DSM 20300 / JCM 1318 / BCRC 11384 / CCUG 27702 / LMG 3730 / NBRC 12168 / NCIMB 10025 / NRRL B-2784 / 534)).